Reading from the N-terminus, the 98-residue chain is Integration host factor subunit alpha (98 aa).

Residues 54-74 (LRDKSSRPGRNPKTGESVPVS) are disordered.

The protein belongs to the bacterial histone-like protein family. In terms of assembly, heterodimer of an alpha and a beta chain.

Functionally, this protein is one of the two subunits of integration host factor, a specific DNA-binding protein that functions in genetic recombination as well as in transcriptional and translational control. The protein is Integration host factor subunit alpha (ihfA) of Pasteurella multocida (strain Pm70).